Here is a 424-residue protein sequence, read N- to C-terminus: Protein UL117 (424 aa).

Residues 57 to 82 (IVPTTSSSLAPPRDDERRPTPPLRPP) are disordered.

It belongs to the herpesviridae U84 family.

It localises to the host nucleus. Functionally, plays a role in the inhibition of host DNA replication in the infected cell. Targets the mini-chromosome maintenance (MCM) complex and blocks the accumulation of MCM proteins and their loading onto host chromatin. The polypeptide is Protein UL117 (UL117) (Human cytomegalovirus (strain AD169) (HHV-5)).